Consider the following 585-residue polypeptide: Arginine--tRNA ligase (585 aa).

The 'HIGH' region motif lies at 126 to 136; it reads PNIAKEMHVGH.

Belongs to the class-I aminoacyl-tRNA synthetase family. In terms of assembly, monomer.

The protein localises to the cytoplasm. The catalysed reaction is tRNA(Arg) + L-arginine + ATP = L-arginyl-tRNA(Arg) + AMP + diphosphate. This is Arginine--tRNA ligase from Rippkaea orientalis (strain PCC 8801 / RF-1) (Cyanothece sp. (strain PCC 8801)).